The following is a 335-amino-acid chain: Tetraacyldisaccharide 4'-kinase (335 aa).

Residue threonine 59–threonine 66 coordinates ATP.

Belongs to the LpxK family.

It carries out the reaction a lipid A disaccharide + ATP = a lipid IVA + ADP + H(+). The protein operates within glycolipid biosynthesis; lipid IV(A) biosynthesis; lipid IV(A) from (3R)-3-hydroxytetradecanoyl-[acyl-carrier-protein] and UDP-N-acetyl-alpha-D-glucosamine: step 6/6. Transfers the gamma-phosphate of ATP to the 4'-position of a tetraacyldisaccharide 1-phosphate intermediate (termed DS-1-P) to form tetraacyldisaccharide 1,4'-bis-phosphate (lipid IVA). The chain is Tetraacyldisaccharide 4'-kinase from Vibrio parahaemolyticus serotype O3:K6 (strain RIMD 2210633).